The sequence spans 338 residues: H(2)-forming methylenetetrahydromethanopterin dehydrogenase-related protein MJ0715 (338 aa).

This sequence belongs to the HMD family.

In Methanocaldococcus jannaschii (strain ATCC 43067 / DSM 2661 / JAL-1 / JCM 10045 / NBRC 100440) (Methanococcus jannaschii), this protein is H(2)-forming methylenetetrahydromethanopterin dehydrogenase-related protein MJ0715.